The sequence spans 335 residues: Probable cytosolic iron-sulfur protein assembly protein Ciao1 (335 aa).

WD repeat units lie at residues 12-51 (GHKG…WSTK), 57-96 (GHKR…FECN), 101-140 (GHEN…EFEC), 146-185 (PHTQ…NDWD), 192-231 (SHTS…NTAG), 250-289 (QHSR…KPDE), and 301-335 (AHDQ…KVSE).

This sequence belongs to the WD repeat CIA1 family.

In terms of biological role, essential component of the cytosolic iron-sulfur (Fe/S) protein assembly machinery. Required for the maturation of extramitochondrial Fe/S proteins. The sequence is that of Probable cytosolic iron-sulfur protein assembly protein Ciao1 from Drosophila simulans (Fruit fly).